The following is a 417-amino-acid chain: NADH-quinone oxidoreductase subunit D (417 aa).

The protein belongs to the complex I 49 kDa subunit family. NDH-1 is composed of 14 different subunits. Subunits NuoB, C, D, E, F, and G constitute the peripheral sector of the complex.

The protein resides in the cell inner membrane. It catalyses the reaction a quinone + NADH + 5 H(+)(in) = a quinol + NAD(+) + 4 H(+)(out). Functionally, NDH-1 shuttles electrons from NADH, via FMN and iron-sulfur (Fe-S) centers, to quinones in the respiratory chain. The immediate electron acceptor for the enzyme in this species is believed to be ubiquinone. Couples the redox reaction to proton translocation (for every two electrons transferred, four hydrogen ions are translocated across the cytoplasmic membrane), and thus conserves the redox energy in a proton gradient. The chain is NADH-quinone oxidoreductase subunit D from Paraburkholderia phymatum (strain DSM 17167 / CIP 108236 / LMG 21445 / STM815) (Burkholderia phymatum).